The primary structure comprises 149 residues: Cyanate hydratase (149 aa).

Catalysis depends on residues Arg90, Glu93, and Ser116.

It belongs to the cyanase family.

It catalyses the reaction cyanate + hydrogencarbonate + 3 H(+) = NH4(+) + 2 CO2. Functionally, catalyzes the reaction of cyanate with bicarbonate to produce ammonia and carbon dioxide. The chain is Cyanate hydratase from Aquifex aeolicus (strain VF5).